We begin with the raw amino-acid sequence, 549 residues long: Oxygen-dependent choline dehydrogenase (549 aa).

An FAD-binding site is contributed by Asp4 to Glu33. His465 (proton acceptor) is an active-site residue. Residues Pro530 to Arg549 form a disordered region.

Belongs to the GMC oxidoreductase family. FAD is required as a cofactor.

It carries out the reaction choline + A = betaine aldehyde + AH2. The enzyme catalyses betaine aldehyde + NAD(+) + H2O = glycine betaine + NADH + 2 H(+). Its pathway is amine and polyamine biosynthesis; betaine biosynthesis via choline pathway; betaine aldehyde from choline (cytochrome c reductase route): step 1/1. In terms of biological role, involved in the biosynthesis of the osmoprotectant glycine betaine. Catalyzes the oxidation of choline to betaine aldehyde and betaine aldehyde to glycine betaine at the same rate. The protein is Oxygen-dependent choline dehydrogenase of Rhizobium etli (strain ATCC 51251 / DSM 11541 / JCM 21823 / NBRC 15573 / CFN 42).